The primary structure comprises 217 residues: tRNA (guanine-N(7)-)-methyltransferase (217 aa).

Glu44, Asp69, Asp96, and Asp118 together coordinate S-adenosyl-L-methionine. The active site involves Asp118. Lys122 contributes to the substrate binding site. The segment at 124–129 is interaction with RNA; the sequence is RHEKRR. Residues Asp154 and 193 to 196 contribute to the substrate site; that span reads TEYE.

It belongs to the class I-like SAM-binding methyltransferase superfamily. TrmB family.

The catalysed reaction is guanosine(46) in tRNA + S-adenosyl-L-methionine = N(7)-methylguanosine(46) in tRNA + S-adenosyl-L-homocysteine. The protein operates within tRNA modification; N(7)-methylguanine-tRNA biosynthesis. In terms of biological role, catalyzes the formation of N(7)-methylguanine at position 46 (m7G46) in tRNA. This chain is tRNA (guanine-N(7)-)-methyltransferase, found in Lactococcus lactis subsp. cremoris (strain SK11).